The sequence spans 611 residues: Dual specificity protein phosphatase CDC14AB (611 aa).

Residues 23 to 178 are a; that stretch reads DLLGASEFIK…ALQHGFLNFE (156 aa). The tract at residues 179–192 is linker; sequence TFDVNEYEHYERVE. The b stretch occupies residues 193–359; sequence NGDLNWITPG…HGDSLRSKQR (167 aa). The Tyrosine-protein phosphatase domain occupies 194 to 352; it reads GDLNWITPGK…KQASLWAHGD (159 aa). Residue cysteine 294 is the Phosphocysteine intermediate of the active site. The interval 408 to 611 is disordered; that stretch reads KLRALKGRRQ…PSLQSEYVQY (204 aa). Low complexity predominate over residues 456-490; sequence SPLKSSKVPASSSSSSSSSSVSASAKRIGRSSSSS. Residues 491-511 show a composition bias toward polar residues; that stretch reads TNLKSTRLASSLGNLYEPNTE. Over residues 512 to 553 the composition is skewed to low complexity; it reads SISSGKPPSPSSFTPHPVRTTYNYHYEVNNNNNQYSTTSSPS. 2 stretches are compositionally biased toward polar residues: residues 554-569 and 591-611; these read KSLG…SGAS and GLST…YVQY.

It belongs to the protein-tyrosine phosphatase family. Non-receptor class CDC14 subfamily.

It localises to the nucleus. The protein localises to the cytoplasm. It is found in the cytoskeleton. The protein resides in the microtubule organizing center. Its subcellular location is the centrosome. It localises to the spindle pole. The protein localises to the spindle. It is found in the cell projection. The protein resides in the kinocilium. It carries out the reaction O-phospho-L-tyrosyl-[protein] + H2O = L-tyrosyl-[protein] + phosphate. The enzyme catalyses O-phospho-L-seryl-[protein] + H2O = L-seryl-[protein] + phosphate. It catalyses the reaction O-phospho-L-threonyl-[protein] + H2O = L-threonyl-[protein] + phosphate. Functionally, dual-specificity phosphatase. Required for centrosome separation and productive cytokinesis during cell division. Dephosphorylates SIRT2 around early anaphase. May dephosphorylate the APC subunit FZR1/CDH1, thereby promoting APC-FZR1 dependent degradation of mitotic cyclins and subsequent exit from mitosis. In Danio rerio (Zebrafish), this protein is Dual specificity protein phosphatase CDC14AB (cdc14ab).